Reading from the N-terminus, the 361-residue chain is Phospho-N-acetylmuramoyl-pentapeptide-transferase (361 aa).

Helical transmembrane passes span 26–46 (AILG…VMIR), 73–93 (TMGG…WADL), 97–117 (YVWV…VDDY), 134–154 (YFWQ…TASM), 168–188 (VSLT…IVGS), 200–220 (GLAI…AYLS), 237–257 (TGEL…FLWF), 264–284 (VFMG…VAVI), 289–309 (IVLF…ILQV), and 340–360 (IVRF…SLKI).

This sequence belongs to the glycosyltransferase 4 family. MraY subfamily. Requires Mg(2+) as cofactor.

The protein resides in the cell inner membrane. It catalyses the reaction UDP-N-acetyl-alpha-D-muramoyl-L-alanyl-gamma-D-glutamyl-meso-2,6-diaminopimeloyl-D-alanyl-D-alanine + di-trans,octa-cis-undecaprenyl phosphate = di-trans,octa-cis-undecaprenyl diphospho-N-acetyl-alpha-D-muramoyl-L-alanyl-D-glutamyl-meso-2,6-diaminopimeloyl-D-alanyl-D-alanine + UMP. It participates in cell wall biogenesis; peptidoglycan biosynthesis. In terms of biological role, catalyzes the initial step of the lipid cycle reactions in the biosynthesis of the cell wall peptidoglycan: transfers peptidoglycan precursor phospho-MurNAc-pentapeptide from UDP-MurNAc-pentapeptide onto the lipid carrier undecaprenyl phosphate, yielding undecaprenyl-pyrophosphoryl-MurNAc-pentapeptide, known as lipid I. In Marinobacter nauticus (strain ATCC 700491 / DSM 11845 / VT8) (Marinobacter aquaeolei), this protein is Phospho-N-acetylmuramoyl-pentapeptide-transferase.